The chain runs to 366 residues: Histidinol-phosphate aminotransferase (366 aa).

N6-(pyridoxal phosphate)lysine is present on lysine 228.

This sequence belongs to the class-II pyridoxal-phosphate-dependent aminotransferase family. Histidinol-phosphate aminotransferase subfamily. In terms of assembly, homodimer. Pyridoxal 5'-phosphate is required as a cofactor.

It carries out the reaction L-histidinol phosphate + 2-oxoglutarate = 3-(imidazol-4-yl)-2-oxopropyl phosphate + L-glutamate. It participates in amino-acid biosynthesis; L-histidine biosynthesis; L-histidine from 5-phospho-alpha-D-ribose 1-diphosphate: step 7/9. This Stutzerimonas stutzeri (Pseudomonas stutzeri) protein is Histidinol-phosphate aminotransferase.